A 503-amino-acid chain; its full sequence is Xylan O-acetyltransferase 12 (503 aa).

The Cytoplasmic segment spans residues 1-54 (MWSALFSHLREVHKRSGVKEEKLIMKSPAAAGEAAGCHKPQATATNKMTVLQSP). A helical; Signal-anchor for type II membrane protein membrane pass occupies residues 55–77 (LGLRTILTSLVAFFIVVSSVSLL). At 78–503 (FDRSQDAQAQ…EFLYAYLMHK (426 aa)) the chain is on the lumenal side. 4 cysteine pairs are disulfide-bonded: Cys153/Cys204, Cys175/Cys240, Cys184/Cys484, and Cys400/Cys480. N-linked (GlcNAc...) asparagine glycosylation is found at Asn154, Asn164, Asn190, and Asn210. A GDS motif motif is present at residues 227–229 (GDS). Ser229 acts as the Nucleophile in catalysis. Residues Asn256, Asn268, Asn373, Asn402, and Asn443 are each glycosylated (N-linked (GlcNAc...) asparagine). The active-site Proton donor is Asp479. The short motif at 479-482 (DCTH) is the DXXH motif element. His482 serves as the catalytic Proton acceptor.

Belongs to the PC-esterase family. TBL subfamily.

Its subcellular location is the golgi apparatus membrane. Functionally, xylan acetyltransferase required for 2-O- and 3-O-monoacetylation of xylosyl residues in xylan. Catalyzes the 2-O-acetylation of xylan, followed by nonenzymatic acetyl migration to the O-3 position, resulting in products that are monoacetylated at both O-2 and O-3 positions. In Oryza sativa subsp. japonica (Rice), this protein is Xylan O-acetyltransferase 12.